The chain runs to 326 residues: DNA-directed RNA polymerase subunit alpha (326 aa).

An alpha N-terminal domain (alpha-NTD) region spans residues 1–232 (MQSATEFLKP…SQLSVFADLE (232 aa)). The alpha C-terminal domain (alpha-CTD) stretch occupies residues 246 to 326 (VDPLLLRPVD…NWPPAGLERP (81 aa)).

It belongs to the RNA polymerase alpha chain family. Homodimer. The RNAP catalytic core consists of 2 alpha, 1 beta, 1 beta' and 1 omega subunit. When a sigma factor is associated with the core the holoenzyme is formed, which can initiate transcription.

The enzyme catalyses RNA(n) + a ribonucleoside 5'-triphosphate = RNA(n+1) + diphosphate. DNA-dependent RNA polymerase catalyzes the transcription of DNA into RNA using the four ribonucleoside triphosphates as substrates. This is DNA-directed RNA polymerase subunit alpha from Thiobacillus denitrificans (strain ATCC 25259 / T1).